We begin with the raw amino-acid sequence, 265 residues long: Mlc titration factor A (265 aa).

Histidine 111, histidine 148, histidine 152, and glutamate 211 together coordinate Zn(2+).

It belongs to the MtfA family. In terms of assembly, interacts with Mlc. It depends on Zn(2+) as a cofactor.

Its subcellular location is the cytoplasm. Its function is as follows. Involved in the modulation of the activity of the glucose-phosphotransferase system (glucose-PTS). Interacts with the transcriptional repressor Mlc, preventing its interaction with DNA and leading to the modulation of expression of genes regulated by Mlc, including ptsG, which encodes the PTS system glucose-specific EIICB component. Shows zinc-dependent metallopeptidase activity. This is Mlc titration factor A from Salmonella choleraesuis (strain SC-B67).